The primary structure comprises 159 residues: Phosphopantetheine adenylyltransferase (159 aa).

Substrate is bound at residue Ser-10. Residues 10-11 (SF) and His-18 each bind ATP. 3 residues coordinate substrate: Lys-42, Leu-77, and Lys-91. Residues 92–94 (GIR), Glu-102, and 126–132 (NAHVSSS) each bind ATP.

It belongs to the bacterial CoaD family. In terms of assembly, homohexamer. Requires Mg(2+) as cofactor.

The protein localises to the cytoplasm. The enzyme catalyses (R)-4'-phosphopantetheine + ATP + H(+) = 3'-dephospho-CoA + diphosphate. The protein operates within cofactor biosynthesis; coenzyme A biosynthesis; CoA from (R)-pantothenate: step 4/5. Reversibly transfers an adenylyl group from ATP to 4'-phosphopantetheine, yielding dephospho-CoA (dPCoA) and pyrophosphate. In Leifsonia xyli subsp. xyli (strain CTCB07), this protein is Phosphopantetheine adenylyltransferase.